The chain runs to 314 residues: 3'-5' exoribonuclease YhaM (314 aa).

The HD domain maps to H163–K279.

Belongs to the YhaM family.

Shows a 3'-5' exoribonuclease activity. The protein is 3'-5' exoribonuclease YhaM of Bacillus cereus (strain G9842).